The chain runs to 66 residues: Large ribosomal subunit protein uL29 (66 aa).

The protein belongs to the universal ribosomal protein uL29 family.

The polypeptide is Large ribosomal subunit protein uL29 (Helicobacter pylori (strain HPAG1)).